A 187-amino-acid polypeptide reads, in one-letter code: Ribonuclease HII (187 aa).

Residues 1 to 187 (MIILGIDEAG…YKPVQVLLNE (187 aa)) form the RNase H type-2 domain. Residues Asp7, Glu8, and Asp99 each contribute to the a divalent metal cation site.

This sequence belongs to the RNase HII family. Requires Mn(2+) as cofactor. It depends on Mg(2+) as a cofactor.

The protein localises to the cytoplasm. It carries out the reaction Endonucleolytic cleavage to 5'-phosphomonoester.. In terms of biological role, endonuclease that specifically degrades the RNA of RNA-DNA hybrids. In Francisella tularensis subsp. holarctica (strain FTNF002-00 / FTA), this protein is Ribonuclease HII.